Reading from the N-terminus, the 110-residue chain is Phosphoribosyl-ATP pyrophosphatase (110 aa).

This sequence belongs to the PRA-PH family.

The protein localises to the cytoplasm. The catalysed reaction is 1-(5-phospho-beta-D-ribosyl)-ATP + H2O = 1-(5-phospho-beta-D-ribosyl)-5'-AMP + diphosphate + H(+). It participates in amino-acid biosynthesis; L-histidine biosynthesis; L-histidine from 5-phospho-alpha-D-ribose 1-diphosphate: step 2/9. The chain is Phosphoribosyl-ATP pyrophosphatase from Pseudomonas syringae pv. syringae (strain B728a).